Here is a 101-residue protein sequence, read N- to C-terminus: UPF0235 protein MmarC7_0309 (101 aa).

Belongs to the UPF0235 family.

This chain is UPF0235 protein MmarC7_0309, found in Methanococcus maripaludis (strain C7 / ATCC BAA-1331).